The sequence spans 264 residues: MQQYLDLMKHILAEGVDKSDRTGTGTRSVFGYQMRFDLSKGFPLVTTKKCHMRSIIHELLWFLKGETNIAYLRENKVSIWDEWADDNGDLGPVYGAQWRSWPTQSGDAIDQISQVIAQIKAQPDSRRLIVSAWNVGELDKMALAPCHAFFQFYVADGKLSCQLYQRSCDVFLGLPFNIASYALLTMMVAQQCDLALGDFVWTGGDTHLYSNHMEQTVLQLSREPKPLPLMTILRKPESIFDYQFEDFELTNYNPHPHIKAPVAV.

Residue R21 coordinates dUMP. (6R)-5,10-methylene-5,6,7,8-tetrahydrofolate is bound at residue H51. R126 to R127 contributes to the dUMP binding site. C146 serves as the catalytic Nucleophile. DUMP-binding positions include R166 to D169, N177, and H207 to Y209. D169 is a (6R)-5,10-methylene-5,6,7,8-tetrahydrofolate binding site. Residue A263 participates in (6R)-5,10-methylene-5,6,7,8-tetrahydrofolate binding.

It belongs to the thymidylate synthase family. Bacterial-type ThyA subfamily. As to quaternary structure, homodimer.

It localises to the cytoplasm. It catalyses the reaction dUMP + (6R)-5,10-methylene-5,6,7,8-tetrahydrofolate = 7,8-dihydrofolate + dTMP. It participates in pyrimidine metabolism; dTTP biosynthesis. Its function is as follows. Catalyzes the reductive methylation of 2'-deoxyuridine-5'-monophosphate (dUMP) to 2'-deoxythymidine-5'-monophosphate (dTMP) while utilizing 5,10-methylenetetrahydrofolate (mTHF) as the methyl donor and reductant in the reaction, yielding dihydrofolate (DHF) as a by-product. This enzymatic reaction provides an intracellular de novo source of dTMP, an essential precursor for DNA biosynthesis. The polypeptide is Thymidylate synthase (Shewanella putrefaciens (strain CN-32 / ATCC BAA-453)).